A 545-amino-acid chain; its full sequence is Methionine--tRNA ligase (545 aa).

A 'HIGH' region motif is present at residues 15–25 (PYANGPIHIGH). 4 residues coordinate Zn(2+): cysteine 146, cysteine 149, cysteine 159, and cysteine 162. Positions 332–336 (KLSKS) match the 'KMSKS' region motif. Lysine 335 is an ATP binding site.

This sequence belongs to the class-I aminoacyl-tRNA synthetase family. MetG type 1 subfamily. Monomer. It depends on Zn(2+) as a cofactor.

It is found in the cytoplasm. The enzyme catalyses tRNA(Met) + L-methionine + ATP = L-methionyl-tRNA(Met) + AMP + diphosphate. Its function is as follows. Is required not only for elongation of protein synthesis but also for the initiation of all mRNA translation through initiator tRNA(fMet) aminoacylation. In Buchnera aphidicola subsp. Schizaphis graminum (strain Sg), this protein is Methionine--tRNA ligase (metG).